Consider the following 3470-residue polypeptide: Mucin-4 (3470 aa).

An N-terminal signal peptide occupies residues 1–28 (MRGPHWRVPWLCLSCLYSCLLLLPDALA). A disordered region spans residues 32 to 163 (TQTPMSLSSS…STESTSVDSG (132 aa)). Over residues 37 to 57 (SLSSSTRTSQMSSQASTSSTS) the composition is skewed to low complexity. Residues Thr-42, Thr-44, Thr-65, Thr-68, Thr-87, Thr-91, Thr-96, Thr-97, Thr-98, Thr-99, Thr-100, Thr-103, Thr-104, Thr-106, Thr-117, Thr-130, Thr-131, Thr-132, Thr-145, Thr-146, Thr-150, Thr-151, Thr-152, and Thr-155 are each glycosylated (O-linked (GalNAc...) threonine). Residues 43–2501 (RTSQMSSQAS…ETLINDFTSS (2459 aa)) are variable number of tandem repeats (VNTR). The span at 66–85 (EQTSTRDTPSSITTVSQSHH) shows a compositional bias: polar residues. Residues 86–111 (TTSMETSKPQTTTTTEVTTSTPSASS) are compositionally biased toward low complexity. The span at 112 to 129 (RDQIQTETSSQRTISPDG) shows a compositional bias: polar residues. Residues 130–162 (TTTSHAPSISSSAPSTTHMLTTTSSTESTSVDS) are compositionally biased toward low complexity. Residue Asn-188 is glycosylated (N-linked (GlcNAc...) asparagine). Residues 199 to 220 (TLTQRQHTGSKQTSSKSQVNIV) show a composition bias toward polar residues. 7 disordered regions span residues 199–679 (TLTQ…STVS), 691–925 (FPQS…NMST), 938–1219 (TLPQ…MSTV), 1232–1400 (LPQS…MSTV), 1413–1524 (LPQS…MSTV), 1537–1647 (LPKS…NMST), and 1660–1992 (TLPQ…TEIT). The span at 221-232 (TSTLSTSTSDST) shows a compositional bias: low complexity. Residues 233–243 (PAQTMSQVTSS) show a composition bias toward polar residues. Residues Thr-236 and Thr-241 are each glycosylated (O-linked (GalNAc...) threonine). The span at 251–272 (STSGVSSTSLTTTEVLTQTSST) shows a compositional bias: low complexity. Over residues 273–283 (DSAPGNTTLRI) the composition is skewed to polar residues. 2 N-linked (GlcNAc...) asparagine glycosylation sites follow: Asn-278 and Asn-286. The segment covering 284-299 (TQNSTTHTTKVSTTST) has biased composition (low complexity). Residue Thr-297 is glycosylated (O-linked (GalNAc...) threonine). Positions 300 to 335 (PQKLSPVSTLINSSQKMSTLPQNQHTESMDTSRQPQ) are enriched in polar residues. An N-linked (GlcNAc...) asparagine glycan is attached at Asn-311. Over residues 336 to 346 (TTTTIEVTTST) the composition is skewed to low complexity. The span at 347-448 (PSASSLHQIQ…LTSSYSQHIQ (102 aa)) shows a compositional bias: polar residues. 6 O-linked (GalNAc...) threonine glycosylation sites follow: Thr-357, Thr-370, Thr-371, Thr-372, Thr-385, and Thr-423. The span at 449 to 470 (SKGTSSKSQTTTNTKVNTSTPS) shows a compositional bias: low complexity. The N-linked (GlcNAc...) asparagine glycan is linked to Asn-465. Residues 479-489 (TETSSQRTNSP) show a composition bias toward polar residues. Thr-494 carries an O-linked (GalNAc...) threonine glycan. Residues 496-510 (HAPSMSSSAPSTTHM) show a composition bias toward low complexity. The segment covering 511-577 (LSTTSSNQST…SQSQHTGSKG (67 aa)) has biased composition (polar residues). The O-linked (GalNAc...) threonine glycan is linked to Thr-513. N-linked (GlcNAc...) asparagine glycosylation occurs at Asn-517. 2 O-linked (GalNAc...) threonine glycosylation sites follow: Thr-542 and Thr-545. N-linked (GlcNAc...) asparagine glycosylation is present at Asn-550. Thr-551, Thr-584, Thr-585, Thr-586, Thr-587, Thr-588, Thr-592, Thr-594, Thr-599, Thr-605, Thr-618, Thr-619, Thr-620, Thr-633, Thr-634, Thr-639, Thr-640, and Thr-655 each carry an O-linked (GalNAc...) threonine glycan. Over residues 578 to 599 (TSSNPQTTTTTEVTTSTPSATT) the composition is skewed to low complexity. Residues 600–631 (HDQIQTETSSQNTISPGETTTSYAPIMSSSAP) show a composition bias toward polar residues. Residues 632–647 (STTHMLSTTSSTQSTS) are compositionally biased toward low complexity. 2 stretches are compositionally biased toward polar residues: residues 653–679 (TTTL…STVS) and 691–701 (FPQSQHTGSKG). Residue Asn-674 is glycosylated (N-linked (GlcNAc...) asparagine). Thr-702, Thr-708, Thr-709, Thr-710, Thr-711, and Thr-716 each carry an O-linked (GalNAc...) threonine glycan. The segment covering 702–723 (TSSNPQTTTTPVVTTSNPSATS) has biased composition (low complexity). Residue Asn-718 is glycosylated (N-linked (GlcNAc...) asparagine). Over residues 724 to 741 (RDQIQTETSSQRTISPGE) the composition is skewed to polar residues. The span at 742 to 772 (TTTSYASIMSSSAPSTTHMLTTTSSTQSTSV) shows a compositional bias: low complexity. Residues Thr-743, Thr-744, Thr-757, and Thr-758 are each glycosylated (O-linked (GalNAc...) threonine). Residues 780 to 824 (VRTQGSTPATTQVSPSSQNMSTVSTPITSTQILSTLPQSQHTGSK) are compositionally biased toward polar residues. N-linked (GlcNAc...) asparagine glycosylation occurs at Asn-798. The span at 825–848 (GTSSNPQTTTSPVVTTSTPSGTSG) shows a compositional bias: low complexity. Thr-826, Thr-832, Thr-833, Thr-834, Thr-839, Thr-840, Thr-842, Thr-846, and Thr-853 each carry an O-linked (GalNAc...) threonine glycan. Polar residues predominate over residues 849-879 (DQIQTETSSQRTISPGKTTTSHALNINSSAP). Asn-875 is a glycosylation site (N-linked (GlcNAc...) asparagine). The segment covering 880–895 (STTHMLSTTSSTQSTS) has biased composition (low complexity). Thr-901 and Thr-902 each carry an O-linked (GalNAc...) threonine glycan. A compositionally biased stretch (polar residues) spans 901 to 925 (TTAGRTQGSTPATTQVSPSSQNMST). Residue Asn-922 is glycosylated (N-linked (GlcNAc...) asparagine). Over residues 948-968 (KSTSTNPQTTTTPEVTTSNPS) the composition is skewed to low complexity. Thr-950, Thr-952, Thr-956, Thr-957, Thr-958, Thr-959, Thr-963, and Thr-964 each carry an O-linked (GalNAc...) threonine glycan. A glycan (N-linked (GlcNAc...) asparagine) is linked at Asn-966. Residues 969–1003 (ATSHDQIETETSSQRTISPGETTTSYAPIMSSSAP) show a composition bias toward polar residues. O-linked (GalNAc...) threonine glycans are attached at residues Thr-990, Thr-991, Thr-992, Thr-1005, Thr-1006, Thr-1011, Thr-1012, and Thr-1015. Over residues 1004–1019 (STTHMLSTTSSTQSTS) the composition is skewed to low complexity. Over residues 1020 to 1065 (VDTRNTTTLTTQGSTPATTQVSPSSKNMSTVSTPITSTHKLSTLPQ) the composition is skewed to polar residues. The N-linked (GlcNAc...) asparagine glycan is linked to Asn-1024. 5 O-linked (GalNAc...) threonine glycosylation sites follow: Thr-1025, Thr-1026, Thr-1027, Thr-1029, and Thr-1038. 3 N-linked (GlcNAc...) asparagine glycosylation sites follow: Asn-1046, Asn-1072, and Asn-1091. The span at 1066–1083 (SQHTGSNGTSSSSSTPAT) shows a compositional bias: low complexity. The segment covering 1091–1120 (NMSTVSTPITTTHKLSTLSQSQHTGSKGTS) has biased composition (polar residues). The span at 1121–1140 (SNPQTTTTPVMTTSTPSATT) shows a compositional bias: low complexity. Residues Thr-1125, Thr-1126, Thr-1127, Thr-1128, Thr-1132, Thr-1133, Thr-1135, Thr-1140, Thr-1174, Thr-1198, and Thr-1207 are each glycosylated (O-linked (GalNAc...) threonine). 2 stretches are compositionally biased toward polar residues: residues 1141–1219 (HDQI…MSTV) and 1232–1242 (LPQSQHTGSKG). Residue Asn-1215 is glycosylated (N-linked (GlcNAc...) asparagine). Thr-1243, Thr-1245, Thr-1249, Thr-1250, Thr-1251, Thr-1252, Thr-1256, Thr-1257, Thr-1259, Thr-1263, Thr-1270, Thr-1283, Thr-1284, Thr-1285, Thr-1298, Thr-1299, Thr-1304, Thr-1305, Thr-1318, and Thr-1319 each carry an O-linked (GalNAc...) threonine glycan. Residues 1243-1264 (TSTNPQTTTTPEVTTSTPSATS) are compositionally biased toward low complexity. Polar residues predominate over residues 1265 to 1296 (RDQIQTETSSQRTISPGETTTSHAPIMSSSAP). Low complexity predominate over residues 1297-1312 (STTHMLSTTSSTQSTS). Polar residues predominate over residues 1318-1353 (TTAGRTQGSTPATTQVSPSSQNMTTTSHALMSSSAP). Residue Asn-1339 is glycosylated (N-linked (GlcNAc...) asparagine). Residues Thr-1341, Thr-1342, Thr-1355, Thr-1356, Thr-1365, Thr-1368, Thr-1372, Thr-1375, Thr-1376, Thr-1377, and Thr-1379 are each glycosylated (O-linked (GalNAc...) threonine). The span at 1354 to 1390 (STTHMLSTTSSTQSTSVDTRHTTTVTTQGSTPATTQV) shows a compositional bias: low complexity. Polar residues-rich tracts occupy residues 1391–1400 (LPSSQNMSTV) and 1413–1477 (LPQS…SSAP). A glycan (N-linked (GlcNAc...) asparagine) is linked at Asn-1396. 9 O-linked (GalNAc...) threonine glycosylation sites follow: Thr-1426, Thr-1430, Thr-1431, Thr-1440, Thr-1451, Thr-1453, Thr-1464, Thr-1465, and Thr-1466. Asn-1471 carries N-linked (GlcNAc...) asparagine glycosylation. The span at 1478–1489 (STTHMLSSTSST) shows a compositional bias: low complexity. 4 O-linked (GalNAc...) threonine glycosylation sites follow: Thr-1479, Thr-1480, Thr-1499, and Thr-1512. Polar residues-rich tracts occupy residues 1490 to 1524 (QITS…MSTV) and 1537 to 1553 (LPKS…SNPQ). N-linked (GlcNAc...) asparagine glycosylation occurs at Asn-1520. O-linked (GalNAc...) threonine glycosylation is found at Thr-1554, Thr-1555, Thr-1557, and Thr-1562. Low complexity predominate over residues 1554 to 1569 (TTITPVVTTSTPSASS). The segment covering 1570–1587 (RDQIQTETSFQRTISPGE) has biased composition (polar residues). 8 O-linked (GalNAc...) threonine glycosylation sites follow: Thr-1588, Thr-1589, Thr-1590, Thr-1604, Thr-1609, Thr-1627, Thr-1635, and Thr-1636. A compositionally biased stretch (low complexity) spans 1588 to 1609 (TTTSHAPSMSSSAPSSTHMLST). Residues 1610–1647 (ASSTQITSVDTRHTTAITTQGSTPATTQVSPSSQNMST) show a composition bias toward polar residues. A glycan (N-linked (GlcNAc...) asparagine) is linked at Asn-1644. The segment covering 1670 to 1693 (KSTSTNPQTTTTPRVTTSTPSASS) has biased composition (low complexity). Residues Thr-1672, Thr-1674, Thr-1678, Thr-1679, Thr-1680, Thr-1681, Thr-1685, Thr-1686, Thr-1688, Thr-1699, and Thr-1714 are each glycosylated (O-linked (GalNAc...) threonine). A compositionally biased stretch (polar residues) spans 1694–1725 (RDQIQTETSSQRTISPGKTTTSHVPNMNSSAP). A glycan (N-linked (GlcNAc...) asparagine) is linked at Asn-1721. A compositionally biased stretch (low complexity) spans 1726 to 1742 (STTHILSTTSSIQSTSG). A compositionally biased stretch (polar residues) spans 1747-1837 (TTAVRTQGST…SSQRTISPGE (91 aa)). Residue Asn-1770 is glycosylated (N-linked (GlcNAc...) asparagine). O-linked (GalNAc...) threonine glycans are attached at residues Thr-1838, Thr-1839, Thr-1840, Thr-1854, Thr-1873, Thr-1874, Thr-1888, Thr-1889, and Thr-1891. Over residues 1838-1859 (TTTSHASSLSSSAPSSTHMLST) the composition is skewed to low complexity. Residues 1860-1877 (ASSTEITSGDTRHTTAIV) show a composition bias toward polar residues. The span at 1878-1895 (TQGSTPATTQTTLTPSSQ) shows a compositional bias: low complexity. A glycan (N-linked (GlcNAc...) asparagine) is linked at Asn-1896. A compositionally biased stretch (polar residues) spans 1896-1927 (NMSTVSTPITSTHKLSPLPQSQHTENMGTSSN). Over residues 1928 to 1945 (PQTTTTPEVTTSTPSATS) the composition is skewed to low complexity. Residues Thr-1930, Thr-1931, Thr-1932, Thr-1933, Thr-1937, Thr-1938, Thr-1940, Thr-1964, Thr-1965, Thr-1966, and Thr-1980 are each glycosylated (O-linked (GalNAc...) threonine). The segment covering 1946-1992 (YDQIQTETSFQRTISPGETTTSHAPSMSNSAPSSTHKLSTASSTEIT) has biased composition (polar residues). Asn-2022 carries an N-linked (GlcNAc...) asparagine glycan. Residues 2037–2055 (STLRQSQHTGSKGTSSNHQ) show a composition bias toward polar residues. Disordered stretches follow at residues 2037-2107 (STLR…NTTH), 2139-2185 (QVSL…NITP), 2205-2237 (TMSW…ILTS), and 2262-2368 (TSTS…TVPL). Thr-2056 and Thr-2057 each carry an O-linked (GalNAc...) threonine glycan. The span at 2056-2071 (TTTTPVVTTSTSSATS) shows a compositional bias: low complexity. Positions 2072–2089 (RDQIQTETSSLRTISPDG) are enriched in polar residues. 3 O-linked (GalNAc...) threonine glycosylation sites follow: Thr-2090, Thr-2091, and Thr-2092. Over residues 2090–2107 (TTTSHASSMSSSSPNTTH) the composition is skewed to low complexity. Asn-2104 carries an N-linked (GlcNAc...) asparagine glycan. 2 O-linked (GalNAc...) threonine glycosylation sites follow: Thr-2105 and Thr-2106. 3 N-linked (GlcNAc...) asparagine glycosylation sites follow: Asn-2148, Asn-2182, and Asn-2225. 2 stretches are compositionally biased toward polar residues: residues 2205-2229 (TMSW…TSPA) and 2262-2303 (TSTS…QTSI). O-linked (GalNAc...) threonine glycans are attached at residues Thr-2264, Thr-2352, Thr-2354, Thr-2359, and Thr-2360. Residues 2344–2367 (TAVSATSSTLTSPSPTTASRSTVP) show a composition bias toward low complexity. Residues 2458-2613 (PFWADADFSS…GLQVYRLHRE (156 aa)) enclose the NIDO domain. The AMOP domain maps to 2614–2726 (ERPNYRLKCL…SFCVWYQLRR (113 aa)). Residues 2738–2937 (RPAWTFGDPH…TWHVNGTGLL (200 aa)) form the VWFD domain. N-linked (GlcNAc...) asparagine glycans are attached at residues Asn-2755, Asn-2773, Asn-2801, Asn-2827, Asn-2844, Asn-2853, Asn-2888, Asn-2909, Asn-2916, Asn-2932, Asn-2958, Asn-2985, Asn-3003, Asn-3014, Asn-3054, Asn-3079, Asn-3102, Asn-3109, Asn-3157, and Asn-3174. Positions 3173–3212 (PNRSCPMNYCYNNGHCDISEAPGCQPTCTCPPAFTDNRCF) constitute an EGF-like 1 domain. Intrachain disulfides connect Cys-3177–Cys-3188, Cys-3182–Cys-3200, and Cys-3202–Cys-3211. N-linked (GlcNAc...) asparagine glycans are attached at residues Asn-3240, Asn-3247, and Asn-3353. Positions 3382–3421 (VSPCSEGYCHNGGQCKHLPDGPQCSCASFTIYSSSGEHCE) constitute an EGF-like 2 domain. 3 cysteine pairs are disulfide-bonded: Cys-3385/Cys-3396, Cys-3390/Cys-3405, and Cys-3407/Cys-3420. The helical transmembrane segment at 3432 to 3452 (GILFGTLGALLLLGILAFMIF) threads the bilayer.

A heterodimeric complex, composed of a mucin-4 alpha chain and a cysteine-rich transmembrane mucin-4 beta chain. Mucin-4 beta chain interacts with ERBB2 via the EGF-like domain 1. In nonpolarized cells, associates with ERBB2 and ERBB3. Proteolytically cleaved into 2 chains, mucin-4 alpha chain and mucin-4 beta chain. Post-translationally, highly O-glycosylated. In terms of processing, predominantly N-glycosylated. As to expression, expressed in trachea, duodenum and intestine. Lower expression in stomach, salivary glands, liver, gallbladder, and kidney.

It localises to the cell membrane. Its subcellular location is the secreted. In terms of biological role, membrane-bound mucin, a family of highly glycosylated proteins that constitute the major component of the mucus, the slimy and viscous secretion covering epithelial surfaces. These glycoproteins play important roles in the protection of the epithelium and are implicated in epithelial renewal and differentiation. Regulates cellular behavior through both anti-adhesive effects on cell-cell and cell-extracellular matrix interactions and its ability to act as an intramembrane ligand for ERBB2. Plays an important role in proliferation and differentiation of epithelial cells by inducing specific phosphorylation of ERBB2. In polarized epithelial cells, segregates ERBB2 and other ERBB receptors and prevents ERBB2 from acting as a coreceptor. The interaction with ERBB2 leads to enhanced expression of CDKN1B. The formation of a MUC4-ERBB2-ERBB3-NRG1 complex leads to down-regulation of CDKN1B, resulting in repression of apoptosis and stimulation of proliferation. Its ability to promote tumor growth may be mainly due to repression of apoptosis as opposed to proliferation. This is Mucin-4 (Muc4) from Mus musculus (Mouse).